Here is a 254-residue protein sequence, read N- to C-terminus: MRLIASDLRSGVERLGDMIAEAKTIVPFTGAGISTECGIPDFRSPGGIWTRNRPIPFDGFVASQEARDESWRRRFAMEETFAAARPGRGHRALASLYRAGKVPAVITQNIDNLHQASGFAHEHVIELHGNTTYARCVGCGQTYQLDWVKRRFDQDGAPNCTVCDEPVKTATISFGQMMPEEEMQRATALSRACDLFIAIGSSLVVWPAAGFPMMAKRAGARLVIINREPTEQDDIADLVIRHDIGETLGPFVGN.

Residues 5–254 (ASDLRSGVER…GETLGPFVGN (250 aa)) enclose the Deacetylase sirtuin-type domain. NAD(+) contacts are provided by alanine 31, threonine 35, phenylalanine 42, arginine 43, glutamine 108, isoleucine 110, aspartate 111, and histidine 128. Nicotinamide is bound at residue phenylalanine 42. Residues isoleucine 110 and aspartate 111 each contribute to the nicotinamide site. Histidine 128 acts as the Proton acceptor in catalysis. Cysteine 136, cysteine 139, cysteine 160, and cysteine 163 together coordinate Zn(2+). Positions 201, 202, 226, 243, and 244 each coordinate NAD(+).

It belongs to the sirtuin family. Class U subfamily. Zn(2+) serves as cofactor.

The protein localises to the cytoplasm. It catalyses the reaction N(6)-acetyl-L-lysyl-[protein] + NAD(+) + H2O = 2''-O-acetyl-ADP-D-ribose + nicotinamide + L-lysyl-[protein]. Its function is as follows. NAD-dependent protein deacetylase which modulates the activities of several enzymes which are inactive in their acetylated form. This is NAD-dependent protein deacetylase 1 from Bradyrhizobium diazoefficiens (strain JCM 10833 / BCRC 13528 / IAM 13628 / NBRC 14792 / USDA 110).